Consider the following 339-residue polypeptide: 4-hydroxy-2-oxovalerate aldolase (339 aa).

A Pyruvate carboxyltransferase domain is found at 7–259 (VILHDMSLRD…QSGIDLYKIM (253 aa)). 15–16 (RD) is a binding site for substrate. Residue aspartate 16 coordinates Mn(2+). Histidine 19 serves as the catalytic Proton acceptor. Substrate contacts are provided by serine 169 and histidine 198. Histidine 198 and histidine 200 together coordinate Mn(2+). Tyrosine 289 serves as a coordination point for substrate.

This sequence belongs to the 4-hydroxy-2-oxovalerate aldolase family.

It carries out the reaction (S)-4-hydroxy-2-oxopentanoate = acetaldehyde + pyruvate. The protein is 4-hydroxy-2-oxovalerate aldolase of Marinomonas sp. (strain MWYL1).